Reading from the N-terminus, the 374-residue chain is Putative serine/threonine-protein kinase ZK507.3 (374 aa).

The 272-residue stretch at 25–296 (WKVIVELGKG…CKLTLKEPLV (272 aa)) folds into the Protein kinase domain. ATP-binding positions include 31–39 (LGKGGYGTV) and Lys60. Catalysis depends on Asp158, which acts as the Proton acceptor. Residues 302 to 374 (NDNESGSTPT…KTRNKKPSRK (73 aa)) form a disordered region. A compositionally biased stretch (low complexity) spans 306 to 324 (SGSTPTTSATACSPSSSTG). Residues 334 to 343 (IASNIDQKSI) are compositionally biased toward polar residues. The segment covering 364–374 (TKTRNKKPSRK) has biased composition (basic residues).

Belongs to the protein kinase superfamily. Ser/Thr protein kinase family.

The catalysed reaction is L-seryl-[protein] + ATP = O-phospho-L-seryl-[protein] + ADP + H(+). It catalyses the reaction L-threonyl-[protein] + ATP = O-phospho-L-threonyl-[protein] + ADP + H(+). The chain is Putative serine/threonine-protein kinase ZK507.3 from Caenorhabditis elegans.